A 68-amino-acid polypeptide reads, in one-letter code: ATP synthase protein 8 (68 aa).

The helical transmembrane segment at 8-24 (VWPTIIMSMLLALFLLM) threads the bilayer. Lysine 54 is modified (N6-acetyllysine; alternate). N6-succinyllysine; alternate is present on lysine 54. The residue at position 57 (lysine 57) is an N6-acetyllysine.

This sequence belongs to the ATPase protein 8 family. As to quaternary structure, F-type ATPases have 2 components, CF(1) - the catalytic core - and CF(0) - the membrane proton channel. Component of an ATP synthase complex composed of ATP5PB, ATP5MC1, ATP5F1E, ATP5PD, ATP5ME, ATP5PF, ATP5MF, MT-ATP6, MT-ATP8, ATP5F1A, ATP5F1B, ATP5F1D, ATP5F1C, ATP5PO, ATP5MG, ATP5MK and ATP5MJ. Interacts with PRICKLE3.

It is found in the mitochondrion membrane. Mitochondrial membrane ATP synthase (F(1)F(0) ATP synthase or Complex V) produces ATP from ADP in the presence of a proton gradient across the membrane which is generated by electron transport complexes of the respiratory chain. F-type ATPases consist of two structural domains, F(1) - containing the extramembraneous catalytic core and F(0) - containing the membrane proton channel, linked together by a central stalk and a peripheral stalk. During catalysis, ATP synthesis in the catalytic domain of F(1) is coupled via a rotary mechanism of the central stalk subunits to proton translocation. Part of the complex F(0) domain. Minor subunit located with subunit a in the membrane. In Hylobates lar (Lar gibbon), this protein is ATP synthase protein 8 (MT-ATP8).